The sequence spans 345 residues: D-apiose dehydrogenase (345 aa).

15 to 16 serves as a coordination point for NAD(+); it reads FF. 4 residues coordinate Mg(2+): Trp24, Lys25, Val27, and Ala30. Residues Asp37, Ser79, 97–98, Asn126, and 165–167 contribute to the NAD(+) site; these read QK and QPY. Substrate is bound at residue Lys98. 4 residues coordinate substrate: Gln165, Asp178, His182, and Tyr232.

Belongs to the Gfo/Idh/MocA family.

The catalysed reaction is D-apiofuranose + NAD(+) = D-apionolactone + NADH + H(+). It participates in carbohydrate metabolism. Involved in catabolism of D-apiose. Catalyzes oxidation of D-apiose to D-apionolactone. In Rhizobium rhizogenes (strain K84 / ATCC BAA-868) (Agrobacterium radiobacter), this protein is D-apiose dehydrogenase.